Consider the following 75-residue polypeptide: MVKRKGASSSEEGWNYEAKVAEIEGIITRIEAGELELEAVFEQFASAVEYLRQCESFLQQRQQQVDLLIETLSEE.

The protein belongs to the XseB family. Heterooligomer composed of large and small subunits.

The protein localises to the cytoplasm. The enzyme catalyses Exonucleolytic cleavage in either 5'- to 3'- or 3'- to 5'-direction to yield nucleoside 5'-phosphates.. Its function is as follows. Bidirectionally degrades single-stranded DNA into large acid-insoluble oligonucleotides, which are then degraded further into small acid-soluble oligonucleotides. In Nostoc punctiforme (strain ATCC 29133 / PCC 73102), this protein is Exodeoxyribonuclease 7 small subunit.